The following is a 110-amino-acid chain: PHD finger-like domain-containing protein 5B (110 aa).

The protein belongs to the PHF5 family.

This Arabidopsis thaliana (Mouse-ear cress) protein is PHD finger-like domain-containing protein 5B.